Reading from the N-terminus, the 556-residue chain is Formate--tetrahydrofolate ligase (556 aa).

Position 65–72 (65–72) interacts with ATP; the sequence is TPAGEGKT.

Belongs to the formate--tetrahydrofolate ligase family.

The enzyme catalyses (6S)-5,6,7,8-tetrahydrofolate + formate + ATP = (6R)-10-formyltetrahydrofolate + ADP + phosphate. It functions in the pathway one-carbon metabolism; tetrahydrofolate interconversion. The chain is Formate--tetrahydrofolate ligase from Agathobacter rectalis (strain ATCC 33656 / DSM 3377 / JCM 17463 / KCTC 5835 / VPI 0990) (Eubacterium rectale).